A 54-amino-acid polypeptide reads, in one-letter code: Photoreceptor disk component PRCD (54 aa).

Cysteine 2 carries the S-palmitoyl cysteine lipid modification. The interval 24 to 54 (QPEPNGVDGAVSGSSLETDLQSSGREKEPLK) is disordered. Over residues 35-46 (SGSSLETDLQSS) the composition is skewed to polar residues.

It belongs to the PRCD family. Interacts with RHO/rhodopsin; the interaction promotes PRCD stability. Post-translationally, palmitoylated at Cys-2. Palmitoylation is essential for protein stability and trafficking to the photoreceptor outer segment, but does not appear to be essential for membrane localization. Probably palmitoylated by ZDHHC3. In terms of processing, phosphorylated. Expressed in retina (at protein level).

Its subcellular location is the cell projection. It localises to the cilium. The protein resides in the photoreceptor outer segment. It is found in the membrane. The protein localises to the endoplasmic reticulum. Its subcellular location is the golgi apparatus. Involved in vision. The polypeptide is Photoreceptor disk component PRCD (Bos taurus (Bovine)).